The sequence spans 91 residues: Gene 76 protein (91 aa).

Positions E58 to K81 are disordered.

The protein is Gene 76 protein (76) of Mycobacterium phage L5 (Mycobacteriophage L5).